A 220-amino-acid polypeptide reads, in one-letter code: LHFPL tetraspan subfamily member 1 protein (220 aa).

A signal peptide spans 1-20 (MRSSLTMVGTLWAFLSLVTA). 2 consecutive transmembrane segments (helical) span residues 86-106 (VVTG…VLGC) and 122-142 (AAQF…PLGW). N-linked (GlcNAc...) asparagine glycosylation occurs at asparagine 153. Residues 165–185 (LGWAYYCAGGGAAAAMLICTW) form a helical membrane-spanning segment.

It belongs to the LHFP family. In terms of tissue distribution, widely expressed. Expressed at high levels in lung, thymus, skeletal muscle, colon and ovary.

It localises to the membrane. The protein is LHFPL tetraspan subfamily member 1 protein of Homo sapiens (Human).